The following is a 178-amino-acid chain: FXYD domain-containing ion transport regulator 5 (178 aa).

A signal peptide spans 1-21 (MSPPSQLCLLTIVALILPSEG). The tract at residues 21–126 (GQTPEKPRSS…YMPPSYIENP (106 aa)) is disordered. Residues 22–146 (QTPEKPRSSF…YDNTTLRKRG (125 aa)) are Extracellular-facing. Positions 29–58 (SSFTAHQSSVTTHVPVPDQTSPGVQTTPPI) are enriched in polar residues. A compositionally biased stretch (low complexity) spans 70 to 79 (QTAAKTKTQQ). A helical membrane pass occupies residues 147–164 (LLVAAVLFITGIIILTSG). Residues 165–178 (KCRQFSQLCLNRHR) lie on the Cytoplasmic side of the membrane.

It belongs to the FXYD family. As to quaternary structure, regulatory subunit of the sodium/potassium-transporting ATPase which is composed of a catalytic alpha subunit, a non-catalytic beta subunit and an additional regulatory subunit. The regulatory subunit, a member of the FXYD protein family, modulates the enzymatic activity in a tissue- and isoform-specific way by changing affinities of the Na+/K+-ATPase toward Na(+), K(+) or ATP. Post-translationally, glycosylated. Spleen, lung, skeletal muscle, and testis.

It is found in the cell membrane. It localises to the basolateral cell membrane. Functionally, associates with and regulates the activity of the sodium/potassium-transporting ATPase (NKA) which catalyzes the hydrolysis of ATP coupled with the exchange of Na(+) and K(+) ions across the plasma membrane. May increase NKA activity by increasing the apparent affinity for Na(+). Involved in down-regulation of E-cadherin which results in reduced cell adhesion. Promotes metastasis. The protein is FXYD domain-containing ion transport regulator 5 (Fxyd5) of Rattus norvegicus (Rat).